The chain runs to 478 residues: Zinc finger C3HC-type protein 1-like (478 aa).

The C3HC-type zinc-finger motif lies at 93–147 (CAKYGWSNIECDMLKCSSCNAYLCASLQPVLDFSKYKQRCVELQEALRKAHEKFC). The interval 285 to 389 (LSAPNTPVSP…SSSSDTSPRG (105 aa)) is disordered. Positions 351 to 363 (SMGQGESSGLSNE) are enriched in polar residues. Residues 377-388 (LCSSSSSDTSPR) show a composition bias toward low complexity.

Post-translationally, phosphorylated. May also be weakly phosphorylated on Tyr residues.

It localises to the nucleus. The protein resides in the nucleus envelope. Functionally, required for proper positioning of a substantial amount of TPR at the nuclear basket (NB) through interaction with TPR. This is Zinc finger C3HC-type protein 1-like (zc3hc1) from Xenopus tropicalis (Western clawed frog).